The primary structure comprises 254 residues: Small ribosomal subunit protein eS1 (254 aa).

Residue A2 is modified to N-acetylalanine; partial.

Belongs to the eukaryotic ribosomal protein eS1 family. In terms of assembly, component of the small ribosomal subunit. Mature ribosomes consist of a small (40S) and a large (60S) subunit. The 40S subunit contains about 33 different proteins and 1 molecule of RNA (18S). The 60S subunit contains about 49 different proteins and 3 molecules of RNA (25S, 5.8S and 5S).

It is found in the cytoplasm. This is Small ribosomal subunit protein eS1 from Zygosaccharomyces rouxii (strain ATCC 2623 / CBS 732 / NBRC 1130 / NCYC 568 / NRRL Y-229).